The chain runs to 485 residues: Noelin (485 aa).

An N-terminal signal peptide occupies residues 1-16; the sequence is MSVPLLKIGVVLSTMA. N-linked (GlcNAc...) asparagine glycans are attached at residues Asn33, Asn103, Asn187, Asn288, Asn307, Asn394, Asn431, and Asn473. Residues 87-225 adopt a coiled-coil conformation; the sequence is RDARTKQLRQ…ERLRACMQKL (139 aa). The region spanning 226 to 478 is the Olfactomedin-like domain; that stretch reads ACGKLTGISD…QILYNVTLFH (253 aa). A disulfide bridge links Cys227 with Cys409.

In terms of assembly, homotetramer; disulfide-linked. Dimer of dimers, giving rise to a V-shaped homotretramer. Component of the AMPAR complex. Glycosylated.

The protein resides in the secreted. The protein localises to the synapse. Its subcellular location is the endoplasmic reticulum. It localises to the cell projection. It is found in the axon. The protein resides in the perikaryon. Its function is as follows. Contributes to the regulation of axonal growth. May play an important role in regulating the production of neural crest cells by the neural tube. The polypeptide is Noelin (OLFM1) (Gallus gallus (Chicken)).